Here is a 258-residue protein sequence, read N- to C-terminus: MSAASLIPVSSLPSLASPFKGNVKTLVAKPCLCPCLKIQRTKLRVSVVNKAASAYNVKSSGENVRFRLDNLGPQPGSRKRPKRKGRGIAAGQGASCGFGMRGQKSRSGPGIMRGFEGGQMPLYRRLPKLRGIAGGMHAGLPKYVNVNLTDIENAGFQDGEEVSLETLKAKRVINPSGRERKLPLKILADGELSKKLTIKAGAFSTSAKEKLEYAGCSLIVLPGRKKWVKPSVAKNLARAEEYFAKKRGGETASEPAPV.

Residues 1–65 (MSAASLIPVS…NVKSSGENVR (65 aa)) constitute a chloroplast transit peptide. The segment at 67–90 (RLDNLGPQPGSRKRPKRKGRGIAA) is disordered. Residues 77-86 (SRKRPKRKGR) are compositionally biased toward basic residues.

This sequence belongs to the universal ribosomal protein uL15 family. In terms of assembly, part of the 50S ribosomal subunit.

It localises to the plastid. It is found in the chloroplast. The sequence is that of Large ribosomal subunit protein uL15c (RPL15) from Pisum sativum (Garden pea).